A 528-amino-acid chain; its full sequence is Chromosomal replication initiator protein DnaA (528 aa).

The segment at Met-1 to Ala-104 is domain I, interacts with DnaA modulators. The disordered stretch occupies residues Ala-93 to Glu-159. Over residues Ala-104–Glu-123 the composition is skewed to basic and acidic residues. Positions Pro-105–Asn-187 are domain II. Acidic residues predominate over residues Thr-149 to Glu-159. The tract at residues Ser-188 to Ala-404 is domain III, AAA+ region. 4 residues coordinate ATP: Gly-232, Gly-234, Lys-235, and Thr-236. The interval Ser-405–Arg-528 is domain IV, binds dsDNA.

It belongs to the DnaA family. As to quaternary structure, oligomerizes as a right-handed, spiral filament on DNA at oriC.

It is found in the cytoplasm. In terms of biological role, plays an essential role in the initiation and regulation of chromosomal replication. ATP-DnaA binds to the origin of replication (oriC) to initiate formation of the DNA replication initiation complex once per cell cycle. Binds the DnaA box (a 9 base pair repeat at the origin) and separates the double-stranded (ds)DNA. Forms a right-handed helical filament on oriC DNA; dsDNA binds to the exterior of the filament while single-stranded (ss)DNA is stabiized in the filament's interior. The ATP-DnaA-oriC complex binds and stabilizes one strand of the AT-rich DNA unwinding element (DUE), permitting loading of DNA polymerase. After initiation quickly degrades to an ADP-DnaA complex that is not apt for DNA replication. Binds acidic phospholipids. This Rhodococcus opacus (strain B4) protein is Chromosomal replication initiator protein DnaA.